We begin with the raw amino-acid sequence, 594 residues long: DNA mismatch repair protein MutL (594 aa).

This sequence belongs to the DNA mismatch repair MutL/HexB family.

In terms of biological role, this protein is involved in the repair of mismatches in DNA. It is required for dam-dependent methyl-directed DNA mismatch repair. May act as a 'molecular matchmaker', a protein that promotes the formation of a stable complex between two or more DNA-binding proteins in an ATP-dependent manner without itself being part of a final effector complex. This chain is DNA mismatch repair protein MutL, found in Rhizorhabdus wittichii (strain DSM 6014 / CCUG 31198 / JCM 15750 / NBRC 105917 / EY 4224 / RW1) (Sphingomonas wittichii).